The chain runs to 464 residues: Kynurenine 3-monooxygenase (464 aa).

The protein belongs to the aromatic-ring hydroxylase family. KMO subfamily. It depends on FAD as a cofactor.

It catalyses the reaction L-kynurenine + NADPH + O2 + H(+) = 3-hydroxy-L-kynurenine + NADP(+) + H2O. Its pathway is cofactor biosynthesis; NAD(+) biosynthesis; quinolinate from L-kynurenine: step 1/3. Catalyzes the hydroxylation of L-kynurenine (L-Kyn) to form 3-hydroxy-L-kynurenine (L-3OHKyn). Required for synthesis of quinolinic acid. In Myxococcus xanthus (strain DK1622), this protein is Kynurenine 3-monooxygenase.